Here is a 173-residue protein sequence, read N- to C-terminus: RNA pyrophosphohydrolase (173 aa).

The 144-residue stretch at 6-149 (GFRANVGIIL…KRSVYRRALQ (144 aa)) folds into the Nudix hydrolase domain. The short motif at 38–59 (GGIDRGETPMDAMYRELWEEVG) is the Nudix box element.

This sequence belongs to the Nudix hydrolase family. RppH subfamily. The cofactor is a divalent metal cation.

Accelerates the degradation of transcripts by removing pyrophosphate from the 5'-end of triphosphorylated RNA, leading to a more labile monophosphorylated state that can stimulate subsequent ribonuclease cleavage. This Psychrobacter cryohalolentis (strain ATCC BAA-1226 / DSM 17306 / VKM B-2378 / K5) protein is RNA pyrophosphohydrolase.